A 274-amino-acid polypeptide reads, in one-letter code: Putative ankyrin repeat protein R597 (274 aa).

ANK repeat units follow at residues 78-112 (VGLP…NNND), 114-144 (PISE…SLKI), 146-174 (SRYH…DIQG), and 176-205 (NLSY…NIND).

The chain is Putative ankyrin repeat protein R597 from Acanthamoeba polyphaga mimivirus (APMV).